The sequence spans 492 residues: Glycosyltransferase alg8 (492 aa).

Transmembrane regions (helical) follow at residues 13 to 32 (GWLL…PPQV), 47 to 69 (IGVW…LYVV), 379 to 401 (LTVA…LLWV), and 421 to 443 (PAYP…HVFF).

Belongs to the glycosyltransferase 2 family.

The protein resides in the cell membrane. Its pathway is glycan biosynthesis; alginate biosynthesis. Functionally, possibly a processive enzyme that polymerizes GDP-mannuronic acid. The polypeptide is Glycosyltransferase alg8 (alg8) (Azotobacter vinelandii).